The primary structure comprises 71 residues: Large ribosomal subunit protein bL31 (71 aa).

The Zn(2+) site is built by C16, C18, C37, and C40.

This sequence belongs to the bacterial ribosomal protein bL31 family. Type A subfamily. In terms of assembly, part of the 50S ribosomal subunit. Zn(2+) serves as cofactor.

Functionally, binds the 23S rRNA. The chain is Large ribosomal subunit protein bL31 from Pseudomonas aeruginosa (strain LESB58).